The following is a 172-amino-acid chain: C-phycocyanin beta chain (172 aa).

Asn72 carries the N4-methylasparagine modification. Positions 82 and 153 each coordinate (2R,3E)-phycocyanobilin.

The protein belongs to the phycobiliprotein family. Heterodimer of an alpha and a beta subunit, which further assembles into trimers and the trimers into hexamers. The basic functional unit of phycobiliproteins is a ring-shaped hexamer formed from two back-to-back trimers contacting via the alpha chain subunits. The trimers are composed of alpha/beta subunit heterodimers arranged around a three-fold axis of symmetry. The phycoerythrins also contain a gamma subunit which is located in the center of the hexamer. In terms of processing, contains two covalently linked bilin chromophores.

The protein localises to the plastid. It is found in the chloroplast thylakoid membrane. Functionally, light-harvesting photosynthetic bile pigment-protein from the phycobiliprotein complex (phycobilisome, PBS). Phycocyanin is the major phycobiliprotein in the PBS rod. The protein is C-phycocyanin beta chain (cpcB) of Rhodella violacea (Red alga).